The following is a 358-amino-acid chain: Thiol protease aleurain (358 aa).

The N-terminal stretch at 1–21 (MSAKTILSSVVLVVLVAASAA) is a signal peptide. Residues 22–42 (ANIGFDESNPIRMVSDGLREV) are interaction with VSR1. Positions 22–140 (ANIGFDESNP…KGSHKVTEAA (119 aa)) are cleaved as a propeptide — activation peptide. A glycan (N-linked (GlcNAc...) asparagine) is linked at asparagine 125. Intrachain disulfides connect cysteine 162/cysteine 205 and cysteine 196/cysteine 238. Cysteine 165 is an active-site residue. Residue asparagine 254 is glycosylated (N-linked (GlcNAc...) asparagine). Cysteine 296 and cysteine 346 are oxidised to a cystine. Residues histidine 305 and asparagine 325 contribute to the active site.

It belongs to the peptidase C1 family. In terms of assembly, interacts with VSR1/BP80B. Expressed in leaves (at protein level).

It is found in the vacuole. The catalysed reaction is Hydrolysis of proteins, acting as an aminopeptidase (notably, cleaving Arg-|-Xaa bonds) as well as an endopeptidase.. Its function is as follows. May play a role in proteolysis leading to mobilization of nitrogen during senescence and starvation. This is Thiol protease aleurain from Arabidopsis thaliana (Mouse-ear cress).